The sequence spans 85 residues: Mitochondrial protein pet191 homolog (85 aa).

The 44-residue stretch at 18–61 folds into the CHCH domain; it reads HSDCMFVKKKSARECLKNKDELPEECKNLIEAYGECKRQMLDMT. The Cx10C motif signature appears at 21–32; the sequence is CMFVKKKSAREC. 2 disulfide bridges follow: Cys21/Cys53 and Cys32/Cys43. The short motif at 43–53 is the Cx9C motif element; that stretch reads CKNLIEAYGEC. Positions 65–85 are disordered; sequence RIAPEKNTDQDTEKPSNVDEQ.

Belongs to the PET191 family.

The protein resides in the mitochondrion. Its function is as follows. Involved in the assembly of cytochrome c oxidase. The polypeptide is Mitochondrial protein pet191 homolog (Schizosaccharomyces pombe (strain 972 / ATCC 24843) (Fission yeast)).